We begin with the raw amino-acid sequence, 457 residues long: Argininosuccinate lyase (457 aa).

This sequence belongs to the lyase 1 family. Argininosuccinate lyase subfamily.

It localises to the cytoplasm. It catalyses the reaction 2-(N(omega)-L-arginino)succinate = fumarate + L-arginine. It functions in the pathway amino-acid biosynthesis; L-arginine biosynthesis; L-arginine from L-ornithine and carbamoyl phosphate: step 3/3. This chain is Argininosuccinate lyase, found in Salmonella arizonae (strain ATCC BAA-731 / CDC346-86 / RSK2980).